A 434-amino-acid polypeptide reads, in one-letter code: Serine/threonine-protein kinase Sgk1-A (434 aa).

The segment at Pro66–Pro94 is disordered. Polar residues predominate over residues Gln84–Pro94. The Protein kinase domain maps to Phe101–Phe358. ATP contacts are provided by residues Ile107–Val115 and Lys130. Residue Asp225 is the Proton acceptor of the active site. Residues Ser359–Leu434 form the AGC-kinase C-terminal domain.

This sequence belongs to the protein kinase superfamily. AGC Ser/Thr protein kinase family.

The protein resides in the cytoplasm. It localises to the nucleus. Its subcellular location is the endoplasmic reticulum. The catalysed reaction is L-seryl-[protein] + ATP = O-phospho-L-seryl-[protein] + ADP + H(+). It catalyses the reaction L-threonyl-[protein] + ATP = O-phospho-L-threonyl-[protein] + ADP + H(+). Protein kinase that may play an important role in cellular stress response. Plays an important role in activating certain potassium, sodium, and chloride channels, suggesting an involvement in the regulation of processes such as cell survival, neuronal excitability, and renal sodium excretion. In Xenopus laevis (African clawed frog), this protein is Serine/threonine-protein kinase Sgk1-A (sgk1-a).